Reading from the N-terminus, the 219-residue chain is Uracil-DNA glycosylase (219 aa).

The Proton acceptor role is filled by Asp61.

It belongs to the uracil-DNA glycosylase (UDG) superfamily. UNG family.

Its subcellular location is the cytoplasm. It carries out the reaction Hydrolyzes single-stranded DNA or mismatched double-stranded DNA and polynucleotides, releasing free uracil.. Excises uracil residues from the DNA which can arise as a result of misincorporation of dUMP residues by DNA polymerase or due to deamination of cytosine. The polypeptide is Uracil-DNA glycosylase (Neisseria meningitidis serogroup B (strain ATCC BAA-335 / MC58)).